Reading from the N-terminus, the 57-residue chain is Large ribosomal subunit protein uL30 (57 aa).

The protein belongs to the universal ribosomal protein uL30 family. In terms of assembly, part of the 50S ribosomal subunit.

The chain is Large ribosomal subunit protein uL30 from Buchnera aphidicola subsp. Cinara cedri (strain Cc).